Consider the following 308-residue polypeptide: MSEKLVEIKDLEISFGEGSKKFVAVKNANFFINKGETFSLVGESGSGKTTIGRAIIGLNDTSNGDIIFDGQKINGKKSREQAAELIRRIQMIFQDPAASLNERATVDYIISEGLYNHRLFKDEEERKEKVQNIIREVGLLAEHLTRYPHEFSGGQRQRIGIARALVMQPDFVIADEPISALDVSVRAQVLNLLKKFQKELGLTYLFIAHDLSVVRFISDRIAVIYKGVIVEVAETEELFNNPIHPYTQALLSAVPIPDPILERKKVLKVYDPSQHDYETDKPSMVEIRPGHYVWANQAELARYQKGLN.

Positions 6–251 (VEIKDLEISF…PIHPYTQALL (246 aa)) constitute an ABC transporter domain. 42–49 (GESGSGKT) provides a ligand contact to ATP.

It belongs to the ABC transporter superfamily.

The protein localises to the cell membrane. Part of the binding-protein-dependent transport system for oligopeptides. Probably responsible for energy coupling to the transport system. This Streptococcus pneumoniae serotype 4 (strain ATCC BAA-334 / TIGR4) protein is Oligopeptide transport ATP-binding protein AmiF (amiF).